Consider the following 62-residue polypeptide: Large ribosomal subunit protein bL28 (62 aa).

A disordered region spans residues 1 to 28 (MARVCAITGRKARSGNSRSHAMNATKRK).

The protein belongs to the bacterial ribosomal protein bL28 family.

The polypeptide is Large ribosomal subunit protein bL28 (Bacillus cytotoxicus (strain DSM 22905 / CIP 110041 / 391-98 / NVH 391-98)).